The chain runs to 312 residues: MAWQHKDLLGLRGLAKQEIELILDTAAPMKDIIGRDIKKVPTLRGKSIVCLFYEASTRTRTSFELAGKFMSADTVNIAAASSSVVKGESLIDTGKTLDAMGTDIIVIRHAASGAPHLLAKHVKARVVNAGDGAHEHPTQGLLDLYTIKERKGRLEGLTVTILGDVLHSRVARSNIWGLRTMGAEVRLCGPSTLLPPELAITGVKVFTRIEEALEGADVVNVLRLQLERQKKGLFPTIREYARQFGLNQERLKRCKSDVLVLHPGPMNRGVEIADDVADADFAAIEEQVTNGVAVRMAILYLMMGGSGSGAVH.

Residues Arg58 and Thr59 each contribute to the carbamoyl phosphate site. Residue Lys86 coordinates L-aspartate. The carbamoyl phosphate site is built by Arg108, His136, and Gln139. The L-aspartate site is built by Arg169 and Arg223. Carbamoyl phosphate-binding residues include Gly264 and Pro265.

This sequence belongs to the aspartate/ornithine carbamoyltransferase superfamily. ATCase family. As to quaternary structure, heterododecamer (2C3:3R2) of six catalytic PyrB chains organized as two trimers (C3), and six regulatory PyrI chains organized as three dimers (R2).

It carries out the reaction carbamoyl phosphate + L-aspartate = N-carbamoyl-L-aspartate + phosphate + H(+). It functions in the pathway pyrimidine metabolism; UMP biosynthesis via de novo pathway; (S)-dihydroorotate from bicarbonate: step 2/3. Its function is as follows. Catalyzes the condensation of carbamoyl phosphate and aspartate to form carbamoyl aspartate and inorganic phosphate, the committed step in the de novo pyrimidine nucleotide biosynthesis pathway. The polypeptide is Aspartate carbamoyltransferase catalytic subunit (Heliobacterium modesticaldum (strain ATCC 51547 / Ice1)).